The chain runs to 763 residues: Translation initiation factor IF-2 (763 aa).

The segment at 52–178 is disordered; sequence KQKKVQTSQN…KDEAIKHETK (127 aa). A compositionally biased stretch (basic and acidic residues) spans 65–82; the sequence is SNDENKKITNKNTEKTTE. The span at 86–96 shows a compositional bias: polar residues; sequence TVDSNKQNNSN. 2 stretches are compositionally biased toward basic and acidic residues: residues 105-116 and 123-135; these read RNNDEESVSHFD and KSEM…LNDK. Over residues 136 to 145 the composition is skewed to basic residues; it reads KKNKNFKNTK. Residues 146–161 show a composition bias toward low complexity; it reads NKNSNNNKNSKNNKNN. Residues 162-178 are compositionally biased toward basic and acidic residues; it reads KNNDHNRKDEAIKHETK. Residues 265–434 enclose the tr-type G domain; it reads ERPPVITVMG…LMVAEMEELK (170 aa). The interval 274-281 is G1; the sequence is GHVDHGKT. Residue 274–281 coordinates GTP; that stretch reads GHVDHGKT. A G2 region spans residues 299-303; it reads GITQH. Positions 320 to 323 are G3; sequence DTPG. Residues 320-324 and 374-377 contribute to the GTP site; these read DTPGH and NKID. The G4 stretch occupies residues 374–377; the sequence is NKID. Positions 410–412 are G5; it reads SAR.

The protein belongs to the TRAFAC class translation factor GTPase superfamily. Classic translation factor GTPase family. IF-2 subfamily.

The protein resides in the cytoplasm. One of the essential components for the initiation of protein synthesis. Protects formylmethionyl-tRNA from spontaneous hydrolysis and promotes its binding to the 30S ribosomal subunits. Also involved in the hydrolysis of GTP during the formation of the 70S ribosomal complex. This Finegoldia magna (strain ATCC 29328 / DSM 20472 / WAL 2508) (Peptostreptococcus magnus) protein is Translation initiation factor IF-2.